A 312-amino-acid chain; its full sequence is R2-like ligand binding oxidase (312 aa).

Mn(2+) is bound by residues Glu-68, Glu-101, and His-104. The segment at residues 71–162 (VTQDIQPFMA…QAQVRASVTY (92 aa)) is a cross-link (3-(O4'-tyrosyl)-valine (Val-Tyr)). Glu-101 is a binding site for Fe cation. Fe cation is bound by residues Glu-167, Glu-202, and His-205.

This sequence belongs to the ribonucleoside diphosphate reductase small chain family. R2-like ligand binding oxidase subfamily. In terms of assembly, homodimer. Fe cation serves as cofactor. Mn(2+) is required as a cofactor.

In terms of biological role, probable oxidase that might be involved in lipid metabolism. This chain is R2-like ligand binding oxidase, found in Mycolicibacterium gilvum (strain PYR-GCK) (Mycobacterium gilvum (strain PYR-GCK)).